The sequence spans 204 residues: HTH-type transcriptional repressor KstR (204 aa).

In terms of domain architecture, HTH tetR-type spans 18-78; sequence RERRKRILDA…SALGREFERI (61 aa). A DNA-binding region (H-T-H motif) is located at residues 41–60; it reads QMRAVAERADVAVGTLYRYF.

As to quaternary structure, homodimer.

In terms of biological role, controls the expression of genes used for utilizing diverse lipids as energy sources. The protein is HTH-type transcriptional repressor KstR (kstR) of Mycolicibacterium smegmatis (strain ATCC 700084 / mc(2)155) (Mycobacterium smegmatis).